Consider the following 569-residue polypeptide: Formate hydrogenlyase subunit 5 (569 aa).

Positions 538–569 are excised as a propeptide; the sequence is MTVVDVRKKKSKVVPYKELERYSIERKNSPLK.

The protein belongs to the complex I 49 kDa subunit family. As to quaternary structure, FHL comprises of a formate dehydrogenase, unidentified electron carriers and a hydrogenase (isoenzyme 3). In this non-energy conserving pathway molecular hydrogen and carbodioxide from formate are released. It depends on [4Fe-4S] cluster as a cofactor. Ni(2+) is required as a cofactor.

The polypeptide is Formate hydrogenlyase subunit 5 (hycE) (Escherichia coli (strain K12)).